A 147-amino-acid chain; its full sequence is Putative toxin MJ0142 (147 aa).

This sequence belongs to the UPF0332 family.

Putative toxin component of a putative type VII toxin-antitoxin (TA) system. Its cognate antitoxin might be MJ0141. The chain is Putative toxin MJ0142 from Methanocaldococcus jannaschii (strain ATCC 43067 / DSM 2661 / JAL-1 / JCM 10045 / NBRC 100440) (Methanococcus jannaschii).